The sequence spans 97 residues: MSTAPTVTPERSNQTVRKTYPNYKVIVLNDDFNTFQHVAECLVKYIPGMTGDLAWDLTNQVHYEGQAIVWVGPQEPAELYHQQLRRAGLTMAPLEAA.

Belongs to the ClpS family. In terms of assembly, binds to the N-terminal domain of the chaperone ClpA.

Its function is as follows. Involved in the modulation of the specificity of the ClpAP-mediated ATP-dependent protein degradation. The protein is ATP-dependent Clp protease adapter protein ClpS of Nostoc sp. (strain PCC 7120 / SAG 25.82 / UTEX 2576).